The sequence spans 420 residues: UPF0053 protein HI_0107 (420 aa).

In terms of domain architecture, CNNM transmembrane spans 2 to 190 (DSIPLSTLFI…GEATPNEQHP (189 aa)). Helical transmembrane passes span 3-23 (SIPL…SAYF), 65-85 (FILI…TVIG), 92-112 (AGVA…SEIF), and 126-146 (FFSS…VWLM). CBS domains are found at residues 208 to 268 (MVPR…KNEF) and 273 to 333 (LIRA…FTTS).

Belongs to the UPF0053 family.

The protein localises to the cell membrane. This chain is UPF0053 protein HI_0107, found in Haemophilus influenzae (strain ATCC 51907 / DSM 11121 / KW20 / Rd).